We begin with the raw amino-acid sequence, 152 residues long: Glycine cleavage system H protein, mitochondrial (152 aa).

The N-terminal 31 residues, 1-31, are a transit peptide targeting the mitochondrion; sequence MALRMWASSTANALRLSSATRPHYSPLSRCF. Residues 53 to 135 enclose the Lipoyl-binding domain; the sequence is VATVGITDHA…YEDGWMIKVK (83 aa). Position 94 is an N6-lipoyllysine (Lys94).

The protein belongs to the GcvH family. As to quaternary structure, the glycine cleavage system is composed of four proteins: P, T, L and H. (R)-lipoate is required as a cofactor.

It localises to the mitochondrion. Functionally, the glycine cleavage system catalyzes the degradation of glycine. The H protein shuttles the methylamine group of glycine from the P protein to the T protein. In Flaveria pubescens (Yellowtops), this protein is Glycine cleavage system H protein, mitochondrial (GDCSH).